The following is a 344-amino-acid chain: Probable dual-specificity RNA methyltransferase RlmN (344 aa).

The Proton acceptor role is filled by glutamate 90. The Radical SAM core domain maps to 96 to 326 (YKYGNAICIS…VTIRRELGSS (231 aa)). A disulfide bond links cysteine 103 and cysteine 331. The [4Fe-4S] cluster site is built by cysteine 110, cysteine 114, and cysteine 117. Residues 157 to 158 (GE), serine 189, 212 to 214 (SLH), and asparagine 288 contribute to the S-adenosyl-L-methionine site. The active-site S-methylcysteine intermediate is the cysteine 331.

This sequence belongs to the radical SAM superfamily. RlmN family. The cofactor is [4Fe-4S] cluster.

It localises to the cytoplasm. The catalysed reaction is adenosine(2503) in 23S rRNA + 2 reduced [2Fe-2S]-[ferredoxin] + 2 S-adenosyl-L-methionine = 2-methyladenosine(2503) in 23S rRNA + 5'-deoxyadenosine + L-methionine + 2 oxidized [2Fe-2S]-[ferredoxin] + S-adenosyl-L-homocysteine. The enzyme catalyses adenosine(37) in tRNA + 2 reduced [2Fe-2S]-[ferredoxin] + 2 S-adenosyl-L-methionine = 2-methyladenosine(37) in tRNA + 5'-deoxyadenosine + L-methionine + 2 oxidized [2Fe-2S]-[ferredoxin] + S-adenosyl-L-homocysteine. Functionally, specifically methylates position 2 of adenine 2503 in 23S rRNA and position 2 of adenine 37 in tRNAs. The chain is Probable dual-specificity RNA methyltransferase RlmN from Caldicellulosiruptor saccharolyticus (strain ATCC 43494 / DSM 8903 / Tp8T 6331).